The primary structure comprises 234 residues: uncharacterized protein (234 aa).

A disordered region spans residues 1-23; that stretch reads MVDQIRSPSWKSGFPSHQHQQGS.

This is an uncharacterized protein from Caenorhabditis elegans.